We begin with the raw amino-acid sequence, 641 residues long: E3 ubiquitin-protein ligase TRIM47 (641 aa).

The RING-type zinc-finger motif lies at 9 to 58; that stretch reads CPICLEPLREPVTLPCGHNFCLACLGALWPHRSAGGTGGSGGPARCPLCQ. T72 carries the post-translational modification Phosphothreonine. The interval 81–123 is disordered; sequence QGSVPGPMSAPASGSTRGATPEPSAPSAPPPAPEPSAPCAPEQ. A compositionally biased stretch (pro residues) spans 103–118; the sequence is PSAPSAPPPAPEPSAP. A B box-type zinc finger spans residues 181–221; it reads LEESLCPRHLRPLERYCRVERVCLCEACATQDHRGHELVPL. Positions 186, 189, 208, and 213 each coordinate Zn(2+). Positions 305–325 form a coiled coil; the sequence is QGDLRRQEEQRSRLSKARHNL. A Phosphoserine modification is found at S393. The interval 396–416 is disordered; it reads DGLQKLGSEDVESQDPDSTSL. A B30.2/SPRY domain is found at 413–634; sequence STSLLESEAP…LQIGPLKKSC (222 aa). A Phosphoserine modification is found at S464. The residue at position 585 (R585) is an Omega-N-methylarginine. Position 591 is a phosphoserine (S591).

It belongs to the TRIM/RBCC family. Expressed in hepatocytes, expression is increased in fatty livers.

It is found in the cytoplasm. Its subcellular location is the nucleus. The enzyme catalyses S-ubiquitinyl-[E2 ubiquitin-conjugating enzyme]-L-cysteine + [acceptor protein]-L-lysine = [E2 ubiquitin-conjugating enzyme]-L-cysteine + N(6)-ubiquitinyl-[acceptor protein]-L-lysine.. It participates in protein modification; protein ubiquitination. In terms of biological role, E3 ubiquitin-protein ligase that mediates the ubiquitination and proteasomal degradation of CYLD. This is E3 ubiquitin-protein ligase TRIM47 from Mus musculus (Mouse).